An 892-amino-acid polypeptide reads, in one-letter code: Translation initiation factor IF-2 (892 aa).

Residues 165 to 175 (EEQAELERQKT) are compositionally biased toward basic and acidic residues. 2 disordered regions span residues 165-250 (EEQA…EDDS) and 264-300 (ERAR…AHGF). Positions 208–222 (PRAVRPAPAARPSVS) are enriched in low complexity. One can recognise a tr-type G domain in the interval 391–560 (PRPPVVTIMG…SIQAEVLELK (170 aa)). Residues 400–407 (GHVDHGKT), 446–450 (DTPGH), and 500–503 (SKID) each bind GTP.

It belongs to the TRAFAC class translation factor GTPase superfamily. Classic translation factor GTPase family. IF-2 subfamily.

The protein resides in the cytoplasm. In terms of biological role, one of the essential components for the initiation of protein synthesis. Protects formylmethionyl-tRNA from spontaneous hydrolysis and promotes its binding to the 30S ribosomal subunits. Also involved in the hydrolysis of GTP during the formation of the 70S ribosomal complex. The protein is Translation initiation factor IF-2 of Xylella fastidiosa (strain 9a5c).